Reading from the N-terminus, the 500-residue chain is Pyridine nucleotide-disulfide oxidoreductase domain-containing protein 1 (500 aa).

An N-acetylmethionine modification is found at Met1.

This sequence belongs to the class-I pyridine nucleotide-disulfide oxidoreductase family. PYROXD1 subfamily. It depends on FAD as a cofactor.

It is found in the nucleus. Its subcellular location is the cytoplasm. The protein resides in the myofibril. It localises to the sarcomere. Its function is as follows. Probable FAD-dependent oxidoreductase; involved in the cellular oxidative stress response. Required for normal sarcomere structure and muscle fiber integrity. The protein is Pyridine nucleotide-disulfide oxidoreductase domain-containing protein 1 (PYROXD1) of Pongo abelii (Sumatran orangutan).